We begin with the raw amino-acid sequence, 139 residues long: uncharacterized protein (139 aa).

An HIT domain is found at 5–114 (IFCKIINKEL…IPRFKNDGFG (110 aa)). Positions 99 to 103 (HTHFH) match the Histidine triad motif motif.

This is an uncharacterized protein from Borreliella burgdorferi (strain ATCC 35210 / DSM 4680 / CIP 102532 / B31) (Borrelia burgdorferi).